Reading from the N-terminus, the 123-residue chain is Holo-[acyl-carrier-protein] synthase (123 aa).

Positions 8 and 60 each coordinate Mg(2+).

This sequence belongs to the P-Pant transferase superfamily. AcpS family. Mg(2+) serves as cofactor.

The protein resides in the cytoplasm. The catalysed reaction is apo-[ACP] + CoA = holo-[ACP] + adenosine 3',5'-bisphosphate + H(+). Its function is as follows. Transfers the 4'-phosphopantetheine moiety from coenzyme A to a Ser of acyl-carrier-protein. The polypeptide is Holo-[acyl-carrier-protein] synthase (Ehrlichia ruminantium (strain Welgevonden)).